The chain runs to 454 residues: Allantoinase (454 aa).

Zn(2+)-binding residues include His59, His61, Lys150, His190, His246, and Asp319. Residue Lys150 is modified to N6-carboxylysine.

It belongs to the metallo-dependent hydrolases superfamily. Allantoinase family. As to quaternary structure, homotetramer. Requires Zn(2+) as cofactor. Carboxylation allows a single lysine to coordinate two zinc ions.

The catalysed reaction is (S)-allantoin + H2O = allantoate + H(+). The protein operates within nitrogen metabolism; (S)-allantoin degradation; allantoate from (S)-allantoin: step 1/1. Functionally, catalyzes the conversion of allantoin (5-ureidohydantoin) to allantoic acid by hydrolytic cleavage of the five-member hydantoin ring. This chain is Allantoinase, found in Bacillus licheniformis (strain ATCC 14580 / DSM 13 / JCM 2505 / CCUG 7422 / NBRC 12200 / NCIMB 9375 / NCTC 10341 / NRRL NRS-1264 / Gibson 46).